Consider the following 379-residue polypeptide: Putative zinc metalloprotease BR1156/BS1330_I1152 (379 aa).

Histidine 33 provides a ligand contact to Zn(2+). The active site involves glutamate 34. Histidine 37 contributes to the Zn(2+) binding site. The next 4 membrane-spanning stretches (helical) occupy residues leucine 39–glycine 61, valine 122–tyrosine 144, phenylalanine 305–leucine 327, and isoleucine 355–phenylalanine 377. Positions threonine 133–lysine 208 constitute a PDZ domain.

Belongs to the peptidase M50B family. Zn(2+) is required as a cofactor.

It is found in the cell inner membrane. The protein is Putative zinc metalloprotease BR1156/BS1330_I1152 of Brucella suis biovar 1 (strain 1330).